We begin with the raw amino-acid sequence, 545 residues long: Carboxypeptidase N subunit 2 (545 aa).

An N-terminal signal peptide occupies residues 1–21 (MLPGAWLLWTSLLLLARPAQP). Positions 22-49 (CPMGCDCFVQEVFCSDEELATVPLDIPP) constitute an LRRNT domain. N-linked (GlcNAc...) asparagine glycans are attached at residues Asn-74, Asn-111, and Asn-119. LRR repeat units follow at residues 98–119 (RLED…IFSN), 122–143 (SLGK…LFQH), 146–167 (ALES…LFQP), 170–191 (HLKT…LFHP), 194–215 (SLQT…VFGK), 218–239 (SLQE…VFSQ), 242–263 (CLER…IFAS), 266–287 (NLTF…LFAH), 290–311 (CLVG…TFAH), 314–335 (NLRS…IFRD), 338–359 (ELVK…LFQN), and 362–383 (KLEL…IFDT). A glycan (N-linked (GlcNAc...) asparagine) is linked at Asn-228. N-linked (GlcNAc...) asparagine glycosylation is present at Asn-266. N-linked (GlcNAc...) asparagine glycans are attached at residues Asn-348 and Asn-359. Residues 395-447 (NPWQCDCHLAYLFNWLQQYTDRLLNIQTYCAGPAYLKGQVVPALNEKQLVCPV) form the LRRCT domain. Asn-518 carries an N-linked (GlcNAc...) asparagine glycan.

Tetramer of two catalytic chains and two glycosylated inactive chains. Whether or not any Cys residues participate in intrachain bonds is unknown, but they do not form interchain disulfide bonds with the 50 kDa catalytic subunit.

The protein localises to the secreted. The 83 kDa subunit binds and stabilizes the catalytic subunit at 37 degrees Celsius and keeps it in circulation. Under some circumstances it may be an allosteric modifier of the catalytic subunit. In Homo sapiens (Human), this protein is Carboxypeptidase N subunit 2 (CPN2).